A 348-amino-acid polypeptide reads, in one-letter code: Phenylalanine--tRNA ligase alpha subunit (348 aa).

Glu-259 contributes to the Mg(2+) binding site.

The protein belongs to the class-II aminoacyl-tRNA synthetase family. Phe-tRNA synthetase alpha subunit type 1 subfamily. As to quaternary structure, tetramer of two alpha and two beta subunits. Mg(2+) serves as cofactor.

It is found in the cytoplasm. It carries out the reaction tRNA(Phe) + L-phenylalanine + ATP = L-phenylalanyl-tRNA(Phe) + AMP + diphosphate + H(+). The protein is Phenylalanine--tRNA ligase alpha subunit of Lactiplantibacillus plantarum (strain ATCC BAA-793 / NCIMB 8826 / WCFS1) (Lactobacillus plantarum).